We begin with the raw amino-acid sequence, 245 residues long: CTD nuclear envelope phosphatase 1B (245 aa).

The chain crosses the membrane as a helical span at residues 7–29; the sequence is CLLGVRTFHGVTSRIWSFFLYIL. The region spanning 58–225 is the FCP1 homology domain; the sequence is NNVKRKILVL…LNLLPMLDAL (168 aa).

The protein belongs to the dullard family.

It is found in the endoplasmic reticulum membrane. It localises to the nucleus membrane. It carries out the reaction O-phospho-L-seryl-[protein] + H2O = L-seryl-[protein] + phosphate. The enzyme catalyses O-phospho-L-threonyl-[protein] + H2O = L-threonyl-[protein] + phosphate. In terms of biological role, serine/threonine protein phosphatase that may dephosphorylate and activate lipins. Lipins are phosphatidate phosphatases that catalyze the conversion of phosphatidic acid to diacylglycerol and control the metabolism of fatty acids at different levels. May indirectly modulate the lipid composition of nuclear and/or endoplasmic reticulum membranes and be required for proper nuclear membrane morphology and/or dynamics. May also indirectly regulate the production of lipid droplets and triacylglycerol. May antagonize BMP signaling. This is CTD nuclear envelope phosphatase 1B (ctdnep1b) from Danio rerio (Zebrafish).